A 156-amino-acid polypeptide reads, in one-letter code: Arginine repressor (156 aa).

Belongs to the ArgR family.

The protein localises to the cytoplasm. It participates in amino-acid biosynthesis; L-arginine biosynthesis [regulation]. Its function is as follows. Regulates arginine biosynthesis genes. The protein is Arginine repressor of Salmonella paratyphi C (strain RKS4594).